Consider the following 202-residue polypeptide: Matrix protein (202 aa).

The tract at residues 14–33 (EDTQKPSPASAPPDGDDLWL) is disordered. Positions 35 to 38 (PPEY) match the PPXY motif motif. Residues 115–151 (KLRRTLIFQWADSRGPLEGEELEHSQEITWDDDTEFV) form an essential for glycoprotein binding region.

It belongs to the lyssavirus matrix protein family. In terms of assembly, homomultimer. Interacts with nucleoprotein and with the cytoplasmic domain of glycoprotein. Interacts with host ATP6V1A; this interaction plays an important role in virion uncoating after viral entry.

The protein localises to the virion membrane. The protein resides in the host endomembrane system. It is found in the host cytoplasm. Its function is as follows. Plays a major role in assembly, budding and uncoating of virion after membrane fusion. Completely covers the ribonucleoprotein coil and keep it in condensed bullet-shaped form. Inhibits viral transcription and stimulates replication. Plays a major role in early induction of TRAIL-mediated apoptosis in infected neurons. Inhibits the integrated stress response (ISR) in the infected cell by blocking the formation of stress granules. This chain is Matrix protein (M), found in Rabies virus (strain HEP-Flury) (RABV).